A 491-amino-acid polypeptide reads, in one-letter code: Transmembrane protein 200A (491 aa).

The Cytoplasmic segment spans residues 1–61 (MIATGGVITG…RGKIRLYSPS (61 aa)). The disordered stretch occupies residues 16–41 (RQDSARSQQHVNLSPSPATQEKKPIR). Residues 20–34 (ARSQQHVNLSPSPAT) show a composition bias toward polar residues. The chain crosses the membrane as a helical span at residues 62 to 82 (GFFLILGVLISIIGIAMAVLG). Residues 83 to 126 (YWPQKEHFIDAETTLSTNETQVIRNEGGVVVRFFEQHLHSDKMK) are Extracellular-facing. N-linked (GlcNAc...) asparagine glycosylation occurs at N100. Residues 127 to 147 (MLGPFTMGIGIFIFICANAIL) traverse the membrane as a helical segment. Topologically, residues 148-491 (HENRDKETKI…LKRGTSETRF (344 aa)) are cytoplasmic. A Phosphoserine modification is found at S350.

It belongs to the TMEM200 family. Expressed in cerebellum.

It localises to the membrane. The protein is Transmembrane protein 200A (TMEM200A) of Homo sapiens (Human).